The chain runs to 189 residues: MVIKLIVGLRNPGSAYEQTRHNAGAWLVTALAQRHNSHFKIDKKMQAELTEIDINNHPCRLVLPLTFMNHSGQTTRIISQFYKIEPGEILIVHDELDLPVGRIKLKTGGGHGGHNGLRDITAQLGTGEFHRLRIGIGHPGHKDLVHQYVLSRPSMHDRQQIYDAIDRGIAIIPIVLSGDMARAMNQVNA.

Tyrosine 16 contacts tRNA. The Proton acceptor role is filled by histidine 21. TRNA contacts are provided by phenylalanine 67, asparagine 69, and asparagine 115.

It belongs to the PTH family. In terms of assembly, monomer.

It is found in the cytoplasm. It carries out the reaction an N-acyl-L-alpha-aminoacyl-tRNA + H2O = an N-acyl-L-amino acid + a tRNA + H(+). In terms of biological role, hydrolyzes ribosome-free peptidyl-tRNAs (with 1 or more amino acids incorporated), which drop off the ribosome during protein synthesis, or as a result of ribosome stalling. Functionally, catalyzes the release of premature peptidyl moieties from peptidyl-tRNA molecules trapped in stalled 50S ribosomal subunits, and thus maintains levels of free tRNAs and 50S ribosomes. The polypeptide is Peptidyl-tRNA hydrolase (Legionella pneumophila subsp. pneumophila (strain Philadelphia 1 / ATCC 33152 / DSM 7513)).